The following is a 127-amino-acid chain: Glycine cleavage system H protein (127 aa).

The Lipoyl-binding domain occupies 22–104 (TVRIGITDFA…YDKAWMIVIE (83 aa)). An N6-lipoyllysine modification is found at Lys-63.

This sequence belongs to the GcvH family. As to quaternary structure, the glycine cleavage system is composed of four proteins: P, T, L and H. It depends on (R)-lipoate as a cofactor.

The glycine cleavage system catalyzes the degradation of glycine. The H protein shuttles the methylamine group of glycine from the P protein to the T protein. Functionally, is also involved in protein lipoylation via its role as an octanoyl/lipoyl carrier protein intermediate. The sequence is that of Glycine cleavage system H protein from Anoxybacillus flavithermus (strain DSM 21510 / WK1).